The sequence spans 409 residues: Spermatogenesis-associated protein 2-like protein (409 aa).

Disordered regions lie at residues 233 to 257 (EDEG…TSEL), 270 to 299 (LWGA…PQPE), and 313 to 337 (RPGD…IPEP).

It belongs to the SPATA2 family.

The chain is Spermatogenesis-associated protein 2-like protein (SPATA2L) from Bos taurus (Bovine).